Here is a 263-residue protein sequence, read N- to C-terminus: Shikimate dehydrogenase (NADP(+)) (263 aa).

Residues 16–18 and threonine 65 each bind shikimate; that span reads SKS. The active-site Proton acceptor is the lysine 69. Positions 90 and 105 each coordinate shikimate. NADP(+)-binding positions include 125-129, serine 181, and leucine 208; that span reads GAGGS. Tyrosine 210 serves as a coordination point for shikimate. NADP(+) is bound at residue glycine 230. Glutamine 237 is a shikimate binding site.

Belongs to the shikimate dehydrogenase family. In terms of assembly, homodimer.

The catalysed reaction is shikimate + NADP(+) = 3-dehydroshikimate + NADPH + H(+). Its pathway is metabolic intermediate biosynthesis; chorismate biosynthesis; chorismate from D-erythrose 4-phosphate and phosphoenolpyruvate: step 4/7. Involved in the biosynthesis of the chorismate, which leads to the biosynthesis of aromatic amino acids. Catalyzes the reversible NADPH linked reduction of 3-dehydroshikimate (DHSA) to yield shikimate (SA). The protein is Shikimate dehydrogenase (NADP(+)) of Helicobacter pylori (strain ATCC 700392 / 26695) (Campylobacter pylori).